The following is a 224-amino-acid chain: MNLRLCSCCRHNGIVSEQGYEYCIFCESVFQKCTKVQKKSNFHVSNKLIHLRNVLRRLLSHQCSGEIISELLDIMEKNQISTDDVDANFVSSFLKANERINKKDYKLVFEIINQVKDEKLNLSTEKINEVVEIFKHLVFFCQENTPSKTINYSFFLDKIFDITSVTKNLKPQTVKNYTKNNSNQLVWENFLAHMRSKKRVTMVEDYGHEYVFVDERFSTCSLEV.

The protein belongs to the orthopoxvirus VLTF-3/OPG127 family. Interacts with the late transcription elongation factor VLTF-4/OPG110. Interacts with the late transcription factors VLTF-1/OPG093.

Acts with RNA polymerase to initiate transcription from late gene promoters. The polypeptide is Viral late gene transcription factor 3 (OPG127) (Monkeypox virus).